Here is a 322-residue protein sequence, read N- to C-terminus: DNA-directed RNA polymerase subunit alpha (322 aa).

Residues M1–I229 are alpha N-terminal domain (alpha-NTD). The segment at N244–L322 is alpha C-terminal domain (alpha-CTD).

It belongs to the RNA polymerase alpha chain family. As to quaternary structure, homodimer. The RNAP catalytic core consists of 2 alpha, 1 beta, 1 beta' and 1 omega subunit. When a sigma factor is associated with the core the holoenzyme is formed, which can initiate transcription.

The catalysed reaction is RNA(n) + a ribonucleoside 5'-triphosphate = RNA(n+1) + diphosphate. Its function is as follows. DNA-dependent RNA polymerase catalyzes the transcription of DNA into RNA using the four ribonucleoside triphosphates as substrates. The chain is DNA-directed RNA polymerase subunit alpha (rpoA) from Carsonella ruddii (strain PV).